Reading from the N-terminus, the 86-residue chain is MASSKAAINLQDIFLNQVRKEHVPVTVYLINGFQLKGLVKGFDNFTVVLESENKQQLLIYKHAISTITPQKPVIFSASDKDEKREE.

Residues aspartate 12–valine 73 enclose the Sm domain.

Belongs to the Hfq family. As to quaternary structure, homohexamer.

RNA chaperone that binds small regulatory RNA (sRNAs) and mRNAs to facilitate mRNA translational regulation in response to envelope stress, environmental stress and changes in metabolite concentrations. Also binds with high specificity to tRNAs. In Thermoanaerobacter pseudethanolicus (strain ATCC 33223 / 39E) (Clostridium thermohydrosulfuricum), this protein is RNA-binding protein Hfq.